The following is a 263-amino-acid chain: MSTPSPQLLVAAAQRTLGMGKRKCPPRATCLHLAGEVLAVARGLKPAVLYDCNSAGVLALQSYLEELQGLGFLKPGLHILEIGENNLIVSPEYTCQHLEQTLLGTVAFVDVSCSQPHPSVLSLDQLPGLKSLIADIITRFQELLKGVSPGVSYSKLHSSDWNLCTLFGILLGYPVSYTFDLNHGEGNCLTMTPLRVFTAQISWLSGQPPVPLYSFSVPESLFPPLRNFLSAWEKELRTRFRAQNAFADLSISSEVVTLPAVAL.

The protein belongs to the UPF0739 family.

This is UPF0739 protein C1orf74 homolog from Rattus norvegicus (Rat).